Here is a 194-residue protein sequence, read N- to C-terminus: Fe/S biogenesis protein NfuA (194 aa).

Cys152 and Cys155 together coordinate [4Fe-4S] cluster.

The protein belongs to the NfuA family. As to quaternary structure, homodimer. It depends on [4Fe-4S] cluster as a cofactor.

Its function is as follows. Involved in iron-sulfur cluster biogenesis. Binds a 4Fe-4S cluster, can transfer this cluster to apoproteins, and thereby intervenes in the maturation of Fe/S proteins. Could also act as a scaffold/chaperone for damaged Fe/S proteins. The chain is Fe/S biogenesis protein NfuA from Stutzerimonas stutzeri (strain A1501) (Pseudomonas stutzeri).